A 300-amino-acid chain; its full sequence is MEIDLKDKIMKLKKEKNAVILAHFYQPKDVQEVADYIGDSYFLIDVGEKCKEDTIVFCGVKFMAESAKILSPNKKVIFPTPKAICPMANMITKEDVLKLKEKHPNAKVVCYINSTAEVKSVVDVCCTSSNAIEIVNNLESNEIIFLPDKNLGSYIQENTPNKKIILWDGYCYVHNKIKASDIIKAKEEYGNDINVLVHPECRKEVRELADYIGSTKGIINFAQNSNSKKYLIVTECGVIHELKKKNPDKEFYMLDMHCSNMKMNSIKEIYTCLKNYNNEVKIDENIKRKAVRALEKMHSL.

Residues His23 and Ser40 each coordinate iminosuccinate. Cys85 is a [4Fe-4S] cluster binding site. Residues 111 to 113 (YIN) and Ser128 contribute to the iminosuccinate site. Cys171 contacts [4Fe-4S] cluster. Iminosuccinate contacts are provided by residues 198 to 200 (HPE) and Thr215. Cys258 is a binding site for [4Fe-4S] cluster.

This sequence belongs to the quinolinate synthase family. Type 2 subfamily. [4Fe-4S] cluster is required as a cofactor.

The protein resides in the cytoplasm. The enzyme catalyses iminosuccinate + dihydroxyacetone phosphate = quinolinate + phosphate + 2 H2O + H(+). The protein operates within cofactor biosynthesis; NAD(+) biosynthesis; quinolinate from iminoaspartate: step 1/1. In terms of biological role, catalyzes the condensation of iminoaspartate with dihydroxyacetone phosphate to form quinolinate. This chain is Quinolinate synthase, found in Clostridium novyi (strain NT).